The primary structure comprises 257 residues: Deoxyribose-phosphate aldolase (257 aa).

D102 serves as the catalytic Proton donor/acceptor. The active-site Schiff-base intermediate with acetaldehyde is the K166. Catalysis depends on K198, which acts as the Proton donor/acceptor.

Belongs to the DeoC/FbaB aldolase family. DeoC type 2 subfamily.

The protein resides in the cytoplasm. It catalyses the reaction 2-deoxy-D-ribose 5-phosphate = D-glyceraldehyde 3-phosphate + acetaldehyde. It participates in carbohydrate degradation; 2-deoxy-D-ribose 1-phosphate degradation; D-glyceraldehyde 3-phosphate and acetaldehyde from 2-deoxy-alpha-D-ribose 1-phosphate: step 2/2. Its function is as follows. Catalyzes a reversible aldol reaction between acetaldehyde and D-glyceraldehyde 3-phosphate to generate 2-deoxy-D-ribose 5-phosphate. The polypeptide is Deoxyribose-phosphate aldolase (Shewanella woodyi (strain ATCC 51908 / MS32)).